Reading from the N-terminus, the 224-residue chain is N-(5'-phosphoribosyl)anthranilate isomerase (224 aa).

Belongs to the TrpF family.

It catalyses the reaction N-(5-phospho-beta-D-ribosyl)anthranilate = 1-(2-carboxyphenylamino)-1-deoxy-D-ribulose 5-phosphate. Its pathway is amino-acid biosynthesis; L-tryptophan biosynthesis; L-tryptophan from chorismate: step 3/5. In Sinorhizobium fredii (strain NBRC 101917 / NGR234), this protein is N-(5'-phosphoribosyl)anthranilate isomerase.